Reading from the N-terminus, the 62-residue chain is U8-theraphotoxin-Cg1a 2 (62 aa).

The signal sequence occupies residues 1–21 (MKTLVLFIIFGLAALFLLSSA). Positions 22–29 (TELEETER) are excised as a propeptide. 3 disulfides stabilise this stretch: Cys-31-Cys-46, Cys-38-Cys-51, and Cys-45-Cys-58.

It belongs to the neurotoxin 10 (Hwtx-1) family. 30 (Jztx-14) subfamily. Expressed by the venom gland.

The protein localises to the secreted. Its function is as follows. Probable ion channel inhibitor. The polypeptide is U8-theraphotoxin-Cg1a 2 (Chilobrachys guangxiensis (Chinese earth tiger tarantula)).